The following is a 465-amino-acid chain: MAMTMRSTRHASKLAQTARLALTNSRRYSTAEPDLKTALKAVIPAKRELFKQVKERSDEVIGEVKVANVIGGMRGLKSMLWEGSVLDPEEGIRFHGKTIKDCQKELPKGTSGTEMLPEAMFWLLLTGQVPSTNQVRAFSRELAEQSHLPQHILDLIKSFPRSMHPMTQLSIAVAALNTESKFAKAYEKGLSKADYWEPTFDDSISLLAKIPRVAALVFRPDEVDQVGTQALDASQDWSYNFAELLGKGGKENQDFHDLLRLYLALHGDHEGGNVSAHATHLVGSALSDPFLSYSAGLLGLAGPLHGLAAQEVLRWILAMQDKIGTKFTDDDVRNYLWDTLKSGRVVPGYGHGVLRKPDPRFQALMDFAATRPDVLANPVFQLVKKNSEIAPAVLTEHGKTKNPHPNVDAASGVLFYHYGFQQPLYYTVTFGVSRALGPLVQLIWDRALGLPIERPKSINLLGLKK.

Residues 1 to 29 constitute a mitochondrion transit peptide; sequence MAMTMRSTRHASKLAQTARLALTNSRRYS. CoA is bound by residues Arg-74 and Lys-192. Residue His-269 coordinates oxaloacetate. Leu-304 contributes to the CoA binding site. His-305 is an active-site residue. CoA-binding residues include Val-346, Gly-348, and Tyr-349. Oxaloacetate-binding residues include His-351 and Arg-360. His-351 is a catalytic residue. Residues Thr-400, Lys-401, and Asn-406 each contribute to the CoA site. Residue Asp-408 is part of the active site. Oxaloacetate is bound by residues Arg-434 and Arg-454.

Belongs to the citrate synthase family. Homodimer.

It is found in the mitochondrion matrix. It catalyses the reaction propanoyl-CoA + oxaloacetate + H2O = (2S,3S)-2-methylcitrate + CoA + H(+). The enzyme catalyses oxaloacetate + acetyl-CoA + H2O = citrate + CoA + H(+). Its pathway is organic acid metabolism; propanoate degradation. Functionally, component of the methylcitrate cycle that catalyzes the synthesis of (2S,3S)-2-methylcitrate from propionyl-CoA and oxaloacetate. Plays an important role in detoxification of propionyl-CoA, an inhibitor of both primary and secondary metabolism. Also has citrate synthase activity using as substrates acetyl-CoA and oxaloacetate. Plays a key role in the estabishment of invasive pulmonary aspergillosis. In Aspergillus fumigatus (strain CBS 144.89 / FGSC A1163 / CEA10) (Neosartorya fumigata), this protein is 2-methylcitrate synthase, mitochondrial.